Reading from the N-terminus, the 595-residue chain is MTSPLCRAASANALPPQDQASTPSSRVKGREASGKPSHLRGKGTAQAWTPGRSKGGSFHRGAGKPSVHSQVAELHKKIQLLEGDRKAFFESSQWNIKKNQETISQLRKETKALELKLLDLLKGDEKVVQAVIREWKWEKPYLKNRTGQALEHLDHRLREKVKQQNALRHQVVLRQRRLEELQLQHSLRLLEMAEAQNRHTEVAKTMRNLENRLEKAQMKAQEAEHITSVYLQLKAYLMDESLNLENRLDSMEAEVVRTKHELEALHVVNQEALNARDIAKNQLQYLEETLVRERKKRERYISECKKRAEEKKLENERMERKTHREHLLLQSDDTIQDSLHAKEEELRQRWSMYQMEVIFGKVKDATGTDETHSLVRRFLAQGDTFAQLETLKSENEQTLVRLKQEKQQLQRELEDLKYSGEATLVSQQKLQAEAQERLKKEERRHAEAKDQLERALRAMQVAKDSLEHLASKLIHITVEDGRFAGKELDPQADNYVPNLLGLVEEKLLKLQAQLQGHDVQEMLCHIANREFLASLEGRLPEYNTRIALPLATSKDKFFDEESEEEDNEVVTRASLKIRSQKLIESHKKHRRSRRS.

The tract at residues 1–69 is disordered; sequence MTSPLCRAAS…RGAGKPSVHS (69 aa). 2 coiled-coil regions span residues 94–327 and 385–473; these read WNIK…REHL and FAQL…ASKL.

As to quaternary structure, component of the outer dynein arm-docking complex along with ODAD1, ODAD2, ODAD4 and CLXN. Interacts with ODAD1. Interacts with PIERCE1 and PIERCE2; the interactions link the outer dynein arms docking complex (ODA-DC) to the internal microtubule inner proteins (MIP) in cilium axoneme.

Its subcellular location is the cytoplasm. It localises to the cytoskeleton. The protein localises to the cilium basal body. The protein resides in the microtubule organizing center. It is found in the centrosome. Its subcellular location is the centriole. It localises to the cilium axoneme. Its function is as follows. Component of the outer dynein arm-docking complex (ODA-DC) that mediates outer dynein arms (ODA) binding onto the doublet microtubule. Involved in mediating assembly of both ODAs and their axonemal docking complex onto ciliary microtubules. The polypeptide is Outer dynein arm-docking complex subunit 3 (Homo sapiens (Human)).